The sequence spans 73 residues: Translation initiation factor IF-1 1 (73 aa).

Positions 1 to 72 (MAKEELIEFG…TKGRINFRHK (72 aa)) constitute an S1-like domain.

It belongs to the IF-1 family. Component of the 30S ribosomal translation pre-initiation complex which assembles on the 30S ribosome in the order IF-2 and IF-3, IF-1 and N-formylmethionyl-tRNA(fMet); mRNA recruitment can occur at any time during PIC assembly.

The protein resides in the cytoplasm. One of the essential components for the initiation of protein synthesis. Stabilizes the binding of IF-2 and IF-3 on the 30S subunit to which N-formylmethionyl-tRNA(fMet) subsequently binds. Helps modulate mRNA selection, yielding the 30S pre-initiation complex (PIC). Upon addition of the 50S ribosomal subunit IF-1, IF-2 and IF-3 are released leaving the mature 70S translation initiation complex. The polypeptide is Translation initiation factor IF-1 1 (Cupriavidus metallidurans (strain ATCC 43123 / DSM 2839 / NBRC 102507 / CH34) (Ralstonia metallidurans)).